The following is a 402-amino-acid chain: Pyridinium-3,5-bisthiocarboxylic acid mononucleotide nickel insertion protein (402 aa).

It belongs to the LarC family.

It carries out the reaction Ni(II)-pyridinium-3,5-bisthiocarboxylate mononucleotide = pyridinium-3,5-bisthiocarboxylate mononucleotide + Ni(2+). Functionally, involved in the biosynthesis of a nickel-pincer cofactor ((SCS)Ni(II) pincer complex). Binds Ni(2+), and functions in nickel delivery to pyridinium-3,5-bisthiocarboxylic acid mononucleotide (P2TMN), to form the mature cofactor. Is thus probably required for the activation of nickel-pincer cofactor-dependent enzymes. The sequence is that of Pyridinium-3,5-bisthiocarboxylic acid mononucleotide nickel insertion protein from Desulfitobacterium hafniense (strain DSM 10664 / DCB-2).